Consider the following 119-residue polypeptide: Aspartate 1-decarboxylase (119 aa).

Catalysis depends on S25, which acts as the Schiff-base intermediate with substrate; via pyruvic acid. Position 25 is a pyruvic acid (Ser) (S25). T57 serves as a coordination point for substrate. Y58 serves as the catalytic Proton donor. A substrate-binding site is contributed by 73 to 75 (GAA).

This sequence belongs to the PanD family. As to quaternary structure, heterooctamer of four alpha and four beta subunits. The cofactor is pyruvate. Post-translationally, is synthesized initially as an inactive proenzyme, which is activated by self-cleavage at a specific serine bond to produce a beta-subunit with a hydroxyl group at its C-terminus and an alpha-subunit with a pyruvoyl group at its N-terminus.

Its subcellular location is the cytoplasm. The catalysed reaction is L-aspartate + H(+) = beta-alanine + CO2. It participates in cofactor biosynthesis; (R)-pantothenate biosynthesis; beta-alanine from L-aspartate: step 1/1. In terms of biological role, catalyzes the pyruvoyl-dependent decarboxylation of aspartate to produce beta-alanine. This Ruthia magnifica subsp. Calyptogena magnifica protein is Aspartate 1-decarboxylase.